The sequence spans 213 residues: Pyrrolidone-carboxylate peptidase (213 aa).

Active-site residues include Glu-78, Cys-141, and His-165.

The protein belongs to the peptidase C15 family. Homotetramer.

It localises to the cytoplasm. It carries out the reaction Release of an N-terminal pyroglutamyl group from a polypeptide, the second amino acid generally not being Pro.. Removes 5-oxoproline from various penultimate amino acid residues except L-proline. In Clostridium perfringens (strain SM101 / Type A), this protein is Pyrrolidone-carboxylate peptidase.